A 217-amino-acid polypeptide reads, in one-letter code: Somatotropin (217 aa).

An N-terminal signal peptide occupies residues Met1 to Ala26. His46 contributes to the Zn(2+) binding site. An intrachain disulfide couples Cys79 to Cys190. Glu199 is a Zn(2+) binding site. Cysteines 207 and 215 form a disulfide.

This sequence belongs to the somatotropin/prolactin family.

The protein localises to the secreted. Its function is as follows. Growth hormone plays an important role in growth control. This chain is Somatotropin (GH), found in Struthio camelus (Common ostrich).